The following is a 337-amino-acid chain: Holliday junction branch migration complex subunit RuvB (337 aa).

The segment at 1–27 is disordered; the sequence is MIEADRLVHAQPQGTEERDEQIDRAMR. The tract at residues 4 to 187 is large ATPase domain (RuvB-L); sequence ADRLVHAQPQ…FGIPLRLEFY (184 aa). Residues arginine 27, glycine 68, lysine 71, threonine 72, threonine 73, 134–136, arginine 177, tyrosine 187, and arginine 224 contribute to the ATP site; that span reads EDY. Position 72 (threonine 72) interacts with Mg(2+). The small ATPAse domain (RuvB-S) stretch occupies residues 188 to 258; sequence NVKDLSSIVT…VAESALDMLD (71 aa). The segment at 261 to 337 is head domain (RuvB-H); that stretch reads VEGFDYMDRK…YQHFNLIQPE (77 aa). Arginine 297, arginine 316, and arginine 321 together coordinate DNA.

It belongs to the RuvB family. Homohexamer. Forms an RuvA(8)-RuvB(12)-Holliday junction (HJ) complex. HJ DNA is sandwiched between 2 RuvA tetramers; dsDNA enters through RuvA and exits via RuvB. An RuvB hexamer assembles on each DNA strand where it exits the tetramer. Each RuvB hexamer is contacted by two RuvA subunits (via domain III) on 2 adjacent RuvB subunits; this complex drives branch migration. In the full resolvosome a probable DNA-RuvA(4)-RuvB(12)-RuvC(2) complex forms which resolves the HJ.

Its subcellular location is the cytoplasm. The enzyme catalyses ATP + H2O = ADP + phosphate + H(+). Functionally, the RuvA-RuvB-RuvC complex processes Holliday junction (HJ) DNA during genetic recombination and DNA repair, while the RuvA-RuvB complex plays an important role in the rescue of blocked DNA replication forks via replication fork reversal (RFR). RuvA specifically binds to HJ cruciform DNA, conferring on it an open structure. The RuvB hexamer acts as an ATP-dependent pump, pulling dsDNA into and through the RuvAB complex. RuvB forms 2 homohexamers on either side of HJ DNA bound by 1 or 2 RuvA tetramers; 4 subunits per hexamer contact DNA at a time. Coordinated motions by a converter formed by DNA-disengaged RuvB subunits stimulates ATP hydrolysis and nucleotide exchange. Immobilization of the converter enables RuvB to convert the ATP-contained energy into a lever motion, pulling 2 nucleotides of DNA out of the RuvA tetramer per ATP hydrolyzed, thus driving DNA branch migration. The RuvB motors rotate together with the DNA substrate, which together with the progressing nucleotide cycle form the mechanistic basis for DNA recombination by continuous HJ branch migration. Branch migration allows RuvC to scan DNA until it finds its consensus sequence, where it cleaves and resolves cruciform DNA. The polypeptide is Holliday junction branch migration complex subunit RuvB (Shewanella loihica (strain ATCC BAA-1088 / PV-4)).